We begin with the raw amino-acid sequence, 258 residues long: Imidazole glycerol phosphate synthase subunit HisF (258 aa).

Catalysis depends on residues Asp-12 and Asp-131.

This sequence belongs to the HisA/HisF family. In terms of assembly, heterodimer of HisH and HisF.

The protein localises to the cytoplasm. It carries out the reaction 5-[(5-phospho-1-deoxy-D-ribulos-1-ylimino)methylamino]-1-(5-phospho-beta-D-ribosyl)imidazole-4-carboxamide + L-glutamine = D-erythro-1-(imidazol-4-yl)glycerol 3-phosphate + 5-amino-1-(5-phospho-beta-D-ribosyl)imidazole-4-carboxamide + L-glutamate + H(+). It functions in the pathway amino-acid biosynthesis; L-histidine biosynthesis; L-histidine from 5-phospho-alpha-D-ribose 1-diphosphate: step 5/9. Functionally, IGPS catalyzes the conversion of PRFAR and glutamine to IGP, AICAR and glutamate. The HisF subunit catalyzes the cyclization activity that produces IGP and AICAR from PRFAR using the ammonia provided by the HisH subunit. This chain is Imidazole glycerol phosphate synthase subunit HisF, found in Sinorhizobium fredii (strain NBRC 101917 / NGR234).